The primary structure comprises 302 residues: Oxygen-dependent coproporphyrinogen-III oxidase (302 aa).

Residue Ser94 participates in substrate binding. A divalent metal cation-binding residues include His98 and His108. His108 serves as the catalytic Proton donor. Asn110–Arg112 contacts substrate. Residues His147 and His177 each coordinate a divalent metal cation. Positions Tyr242–Glu277 are important for dimerization. Gly260 to Arg262 contacts substrate.

Belongs to the aerobic coproporphyrinogen-III oxidase family. As to quaternary structure, homodimer. It depends on a divalent metal cation as a cofactor.

It is found in the cytoplasm. It carries out the reaction coproporphyrinogen III + O2 + 2 H(+) = protoporphyrinogen IX + 2 CO2 + 2 H2O. Its pathway is porphyrin-containing compound metabolism; protoporphyrin-IX biosynthesis; protoporphyrinogen-IX from coproporphyrinogen-III (O2 route): step 1/1. Its function is as follows. Involved in the heme biosynthesis. Catalyzes the aerobic oxidative decarboxylation of propionate groups of rings A and B of coproporphyrinogen-III to yield the vinyl groups in protoporphyrinogen-IX. The protein is Oxygen-dependent coproporphyrinogen-III oxidase of Erwinia tasmaniensis (strain DSM 17950 / CFBP 7177 / CIP 109463 / NCPPB 4357 / Et1/99).